We begin with the raw amino-acid sequence, 547 residues long: Type I inositol polyphosphate 5-phosphatase 4 (547 aa).

The segment covering 56–67 (CSVRKSKTETRS) has biased composition (basic and acidic residues). A disordered region spans residues 56 to 80 (CSVRKSKTETRSKRNSGRARRNKLD). Catalytic stretches follow at residues 387–402 (DRVI…IALS) and 467–482 (KRRT…WHGS).

Belongs to the inositol polyphosphate 5-phosphatase family.

The polypeptide is Type I inositol polyphosphate 5-phosphatase 4 (Arabidopsis thaliana (Mouse-ear cress)).